The chain runs to 149 residues: Transcriptional repressor NrdR (149 aa).

The segment at 3 to 34 is a zinc-finger region; that stretch reads CPFCFAVDTKVIDSRLVGGGSSVRRRRQCLVC. Residues 49–139 enclose the ATP-cone domain; that stretch reads PRVVKSNDVR…VYRSFEDIKE (91 aa).

It belongs to the NrdR family. Zn(2+) is required as a cofactor.

Functionally, negatively regulates transcription of bacterial ribonucleotide reductase nrd genes and operons by binding to NrdR-boxes. The protein is Transcriptional repressor NrdR of Shigella boydii serotype 18 (strain CDC 3083-94 / BS512).